Here is a 126-residue protein sequence, read N- to C-terminus: Holo-[acyl-carrier-protein] synthase (126 aa).

Mg(2+)-binding residues include D9 and E57.

This sequence belongs to the P-Pant transferase superfamily. AcpS family. Mg(2+) is required as a cofactor.

It is found in the cytoplasm. It carries out the reaction apo-[ACP] + CoA = holo-[ACP] + adenosine 3',5'-bisphosphate + H(+). Its function is as follows. Transfers the 4'-phosphopantetheine moiety from coenzyme A to a Ser of acyl-carrier-protein. This chain is Holo-[acyl-carrier-protein] synthase, found in Alteromonas mediterranea (strain DSM 17117 / CIP 110805 / LMG 28347 / Deep ecotype).